Consider the following 86-residue polypeptide: Small ribosomal subunit protein uS17 (86 aa).

Belongs to the universal ribosomal protein uS17 family. Part of the 30S ribosomal subunit.

In terms of biological role, one of the primary rRNA binding proteins, it binds specifically to the 5'-end of 16S ribosomal RNA. This is Small ribosomal subunit protein uS17 from Bifidobacterium adolescentis (strain ATCC 15703 / DSM 20083 / NCTC 11814 / E194a).